A 185-amino-acid polypeptide reads, in one-letter code: Elongation factor P (185 aa).

This sequence belongs to the elongation factor P family.

Its subcellular location is the cytoplasm. Its pathway is protein biosynthesis; polypeptide chain elongation. Involved in peptide bond synthesis. Stimulates efficient translation and peptide-bond synthesis on native or reconstituted 70S ribosomes in vitro. Probably functions indirectly by altering the affinity of the ribosome for aminoacyl-tRNA, thus increasing their reactivity as acceptors for peptidyl transferase. The protein is Elongation factor P of Bacillus cytotoxicus (strain DSM 22905 / CIP 110041 / 391-98 / NVH 391-98).